The primary structure comprises 44 residues: Large ribosomal subunit protein bL34 (44 aa).

This sequence belongs to the bacterial ribosomal protein bL34 family.

The chain is Large ribosomal subunit protein bL34 from Variovorax paradoxus (strain S110).